Here is a 461-residue protein sequence, read N- to C-terminus: Calcitonin gene-related peptide type 1 receptor (461 aa).

A signal peptide spans 1-22 (MEKKCTLYFLVLLPFFMILVTA). At 23–139 (ELEESPEDSI…NTHEKVKTAL (117 aa)) the chain is on the extracellular side. Intrachain disulfides connect cysteine 48–cysteine 74, cysteine 65–cysteine 105, and cysteine 88–cysteine 127. 3 N-linked (GlcNAc...) asparagine glycosylation sites follow: asparagine 66, asparagine 118, and asparagine 123. Residues 140–164 (NLFYLTIIGHGLSIASLLISLGIFF) traverse the membrane as a helical segment. Topologically, residues 165-175 (YFKSLSCQRIT) are cytoplasmic. Residues 176 to 198 (LHKNLFFSFVCNSVVTIIHLTAV) traverse the membrane as a helical segment. The Extracellular portion of the chain corresponds to 199–209 (ANNQALVATNP). A helical transmembrane segment spans residues 210–238 (VSCKVSQFIHLYLMGCNYFWMLCEGIYLH). Topologically, residues 239 to 252 (TLIVVAVFAEKQHL) are cytoplasmic. A helical membrane pass occupies residues 253–273 (MWYYFLGWGFPLIPACIHAIA). Topologically, residues 274–289 (RSLYYNDNCWISSDTH) are extracellular. The required for RAMP3 interaction stretch occupies residues 288-289 (TH). A helical transmembrane segment spans residues 290–314 (LLYIIHGPICAALLVNLFFLLNIVR). Residues 315–329 (VLITKLKVTHQAESN) are Cytoplasmic-facing. Residues 330–351 (LYMKAVRATLILVPLLGIEFVL) form a helical membrane-spanning segment. The Extracellular portion of the chain corresponds to 352–366 (IPWRPEGKIAEEVYD). Residues 367-387 (YIMHILMHFQGLLVSTIFCFF) form a helical membrane-spanning segment. Residues serine 420 and serine 445 each carry the phosphoserine modification.

It belongs to the G-protein coupled receptor 2 family. As to quaternary structure, heterodimer of CALCRL and RAMP1; the receptor complex functions as CGRP receptor. Heterodimer of CALCRL and RAMP2 or CALCRL and RAMP3; the complexes function as adrenomedullin receptor. As to expression, predominantly expressed in the lung and heart.

It localises to the cell membrane. Its function is as follows. G protein-coupled receptor which specificity is determined by its interaction with receptor-activity-modifying proteins (RAMPs). Together with RAMP1, form the receptor complex for calcitonin-gene-related peptides CALCA/CGRP1 and CALCB/CGRP2. Together with RAMP2 or RAMP3, function as receptor complexes for adrenomedullin (ADM and ADM2). Ligand binding causes a conformation change that triggers signaling via guanine nucleotide-binding proteins (G proteins) and modulates the activity of downstream effectors. Activates cAMP-dependent pathway. The sequence is that of Calcitonin gene-related peptide type 1 receptor from Homo sapiens (Human).